The following is a 282-amino-acid chain: NADPH-dependent 7-cyano-7-deazaguanine reductase (282 aa).

88–90 (IES) is a binding site for substrate. 90–91 (SK) contributes to the NADPH binding site. Cysteine 190 (thioimide intermediate) is an active-site residue. The Proton donor role is filled by aspartate 197. 229 to 230 (HE) provides a ligand contact to substrate. 258 to 259 (RG) is a binding site for NADPH.

This sequence belongs to the GTP cyclohydrolase I family. QueF type 2 subfamily. As to quaternary structure, homodimer.

Its subcellular location is the cytoplasm. The catalysed reaction is 7-aminomethyl-7-carbaguanine + 2 NADP(+) = 7-cyano-7-deazaguanine + 2 NADPH + 3 H(+). The protein operates within tRNA modification; tRNA-queuosine biosynthesis. Functionally, catalyzes the NADPH-dependent reduction of 7-cyano-7-deazaguanine (preQ0) to 7-aminomethyl-7-deazaguanine (preQ1). The polypeptide is NADPH-dependent 7-cyano-7-deazaguanine reductase (Salmonella arizonae (strain ATCC BAA-731 / CDC346-86 / RSK2980)).